We begin with the raw amino-acid sequence, 196 residues long: Large ribosomal subunit protein uL18 (196 aa).

Belongs to the universal ribosomal protein uL18 family. As to quaternary structure, part of the 50S ribosomal subunit. Contacts the 5S and 23S rRNAs.

This is one of the proteins that bind and probably mediate the attachment of the 5S RNA into the large ribosomal subunit, where it forms part of the central protuberance. The chain is Large ribosomal subunit protein uL18 from Saccharolobus islandicus (strain Y.N.15.51 / Yellowstone #2) (Sulfolobus islandicus).